Reading from the N-terminus, the 994-residue chain is E3 ubiquitin-protein ligase Arkadia (994 aa).

Residues Lys-19, Lys-28, Lys-34, Lys-47, Lys-59, Lys-73, Lys-87, Lys-96, and Lys-110 each participate in a glycyl lysine isopeptide (Lys-Gly) (interchain with G-Cter in SUMO2) cross-link. Residues His-66–Leu-89 are compositionally biased toward basic and acidic residues. Residues His-66–Gln-106 are disordered. Residues Gln-120 to Ser-191 are disordered. The span at Ser-132–Asp-151 shows a compositional bias: low complexity. Residues Arg-164–Lys-173 are compositionally biased toward polar residues. Lys-173 participates in a covalent cross-link: Glycyl lysine isopeptide (Lys-Gly) (interchain with G-Cter in SUMO2). Positions Ser-174–Trp-184 are enriched in basic residues. Residues Lys-198 and Lys-218 each participate in a glycyl lysine isopeptide (Lys-Gly) (interchain with G-Cter in SUMO2) cross-link. The interval Cys-212–Leu-277 is disordered. Residues Met-234–Tyr-247 show a composition bias toward basic residues. The interaction with AXIN1 stretch occupies residues Val-241–Ser-404. Low complexity predominate over residues Ser-252–Thr-271. The SUMO interaction motif 1 (SIM) motif lies at Val-300–Glu-304. The SUMO interaction motif 2 (SIM) motif lies at Glu-325–Val-331. The interval Ser-337–Val-371 is disordered. Over residues His-347–Ser-357 the composition is skewed to low complexity. The SUMO interaction motif 3 (SIM) motif lies at Val-382 to Thr-386. Disordered stretches follow at residues Asp-388–Arg-476, His-508–Cys-537, Ala-610–Val-684, and Ile-696–Ala-742. Over residues Val-395 to Thr-467 the composition is skewed to polar residues. Residues His-508–Pro-522 show a composition bias toward basic residues. Positions Asn-670–Gln-680 are enriched in pro residues. The segment at Tyr-907–His-909 is ubiquitin binding. Glycyl lysine isopeptide (Lys-Gly) (interchain with G-Cter in SUMO2) cross-links involve residues Lys-923 and Lys-927. Residues Cys-942 and Cys-945 each contribute to the Zn(2+) site. An RING-type; atypical zinc finger spans residues Cys-942–Arg-983. The segment at Arg-957–Met-961 is ubiquitin binding. Zn(2+) contacts are provided by His-965 and Cys-968.

The protein belongs to the Arkadia family. In terms of assembly, monomer. Interacts with SMAD6, SMAD7, AXIN1, AXIN2 and SKIL isoform SNON. Interacts with (phosphorylated) SMAD2 and SMAD3. Part of a complex containing RNF111, AXIN1 and SMAD7. Interacts (via SIM domains) with SUMO1 and SUMO2. As to expression, broadly expressed.

It is found in the nucleus. The protein localises to the cytoplasm. Its subcellular location is the PML body. The enzyme catalyses S-ubiquitinyl-[E2 ubiquitin-conjugating enzyme]-L-cysteine + [acceptor protein]-L-lysine = [E2 ubiquitin-conjugating enzyme]-L-cysteine + N(6)-ubiquitinyl-[acceptor protein]-L-lysine.. It participates in protein modification; protein ubiquitination. Its activity is regulated as follows. Binds free ubiquitin non-covalently via its RING-type zinc finger. Ubiquitin-binding leads to enhance the E3 ubiquitin-protein ligase activity by stabilizing the ubiquitin-conjugating enzyme E2 (donor ubiquitin) in the 'closed' conformation and activating ubiquitin transfer. E3 ubiquitin-protein ligase. Required for mesoderm patterning during embryonic development. Acts as an enhancer of the transcriptional responses of the SMAD2/SMAD3 effectors, which are activated downstream of BMP. Acts by mediating ubiquitination and degradation of SMAD inhibitors such as SMAD7, inducing their proteasomal degradation and thereby enhancing the transcriptional activity of TGF-beta and BMP. In addition to enhance transcription of SMAD2/SMAD3 effectors, also regulates their turnover by mediating their ubiquitination and subsequent degradation, coupling their activation with degradation, thereby ensuring that only effectors 'in use' are degraded. Activates SMAD3/SMAD4-dependent transcription by triggering signal-induced degradation of SNON isoform of SKIL. Associates with UBE2D2 as an E2 enzyme. Specifically binds polysumoylated chains via SUMO interaction motifs (SIMs) and mediates ubiquitination of sumoylated substrates. Catalyzes 'Lys-63'-linked ubiquitination of sumoylated XPC in response to UV irradiation, promoting nucleotide excision repair. Mediates ubiquitination and degradation of sumoylated PML. The regulation of the BMP-SMAD signaling is however independent of sumoylation and is not dependent of SUMO interaction motifs (SIMs). This chain is E3 ubiquitin-protein ligase Arkadia, found in Homo sapiens (Human).